Consider the following 450-residue polypeptide: NADP-specific glutamate dehydrogenase (450 aa).

Lys111 is an active-site residue.

This sequence belongs to the Glu/Leu/Phe/Val dehydrogenases family. As to quaternary structure, homohexamer.

The enzyme catalyses L-glutamate + NADP(+) + H2O = 2-oxoglutarate + NH4(+) + NADPH + H(+). The polypeptide is NADP-specific glutamate dehydrogenase (Hebeloma cylindrosporum).